We begin with the raw amino-acid sequence, 398 residues long: LIM domain-binding protein 2 (398 aa).

Disordered regions lie at residues 245–280 (PPAE…TSAY) and 354–398 (DAAN…QASQ). Residues 263–279 (STNNASNSNAGNNATSA) show a composition bias toward low complexity. One can recognise an LIM interaction domain (LID) domain in the interval 323–362 (DVMVVGEPTLMGGEFGDEDERLITRLENTQYDAANGMDDE).

Belongs to the LDB family. As to expression, expressed in adult brain, lung, spleen and kidney. Isoform b is generally expressed at a higher level than isoform a.

The protein resides in the nucleus. Its function is as follows. Binds to the LIM domain of a wide variety of LIM domain-containing transcription factors. The sequence is that of LIM domain-binding protein 2 from Xenopus laevis (African clawed frog).